The primary structure comprises 389 residues: Chalcone synthase E (389 aa).

Cysteine 164 is a catalytic residue.

Belongs to the thiolase-like superfamily. Chalcone/stilbene synthases family.

The catalysed reaction is (E)-4-coumaroyl-CoA + 3 malonyl-CoA + 3 H(+) = 2',4,4',6'-tetrahydroxychalcone + 3 CO2 + 4 CoA. It participates in secondary metabolite biosynthesis; flavonoid biosynthesis. The primary product of this enzyme is 4,2',4',6'-tetrahydroxychalcone (also termed naringenin-chalcone or chalcone) which can under specific conditions spontaneously isomerize into naringenin. The polypeptide is Chalcone synthase E (CHSE) (Ipomoea purpurea (Common morning glory)).